Reading from the N-terminus, the 157-residue chain is NADPH-dependent 7-cyano-7-deazaguanine reductase (157 aa).

The active-site Thioimide intermediate is cysteine 55. The active-site Proton donor is aspartate 62. Substrate is bound by residues 77–79 and 96–97; these read VES and HE.

This sequence belongs to the GTP cyclohydrolase I family. QueF type 1 subfamily.

The protein resides in the cytoplasm. It catalyses the reaction 7-aminomethyl-7-carbaguanine + 2 NADP(+) = 7-cyano-7-deazaguanine + 2 NADPH + 3 H(+). It participates in tRNA modification; tRNA-queuosine biosynthesis. Functionally, catalyzes the NADPH-dependent reduction of 7-cyano-7-deazaguanine (preQ0) to 7-aminomethyl-7-deazaguanine (preQ1). This chain is NADPH-dependent 7-cyano-7-deazaguanine reductase, found in Neisseria gonorrhoeae (strain ATCC 700825 / FA 1090).